A 220-amino-acid chain; its full sequence is uncharacterized protein (220 aa).

It belongs to the DadA oxidoreductase family. It depends on FAD as a cofactor.

This is an uncharacterized protein from Halorhodospira halophila (Ectothiorhodospira halophila).